A 483-amino-acid chain; its full sequence is Aspartyl/glutamyl-tRNA(Asn/Gln) amidotransferase subunit B (483 aa).

It belongs to the GatB/GatE family. GatB subfamily. Heterotrimer of A, B and C subunits.

It carries out the reaction L-glutamyl-tRNA(Gln) + L-glutamine + ATP + H2O = L-glutaminyl-tRNA(Gln) + L-glutamate + ADP + phosphate + H(+). It catalyses the reaction L-aspartyl-tRNA(Asn) + L-glutamine + ATP + H2O = L-asparaginyl-tRNA(Asn) + L-glutamate + ADP + phosphate + 2 H(+). Allows the formation of correctly charged Asn-tRNA(Asn) or Gln-tRNA(Gln) through the transamidation of misacylated Asp-tRNA(Asn) or Glu-tRNA(Gln) in organisms which lack either or both of asparaginyl-tRNA or glutaminyl-tRNA synthetases. The reaction takes place in the presence of glutamine and ATP through an activated phospho-Asp-tRNA(Asn) or phospho-Glu-tRNA(Gln). The sequence is that of Aspartyl/glutamyl-tRNA(Asn/Gln) amidotransferase subunit B from Rickettsia canadensis (strain McKiel).